Here is a 185-residue protein sequence, read N- to C-terminus: Ribosome maturation factor RimP (185 aa).

Belongs to the RimP family.

The protein localises to the cytoplasm. Its function is as follows. Required for maturation of 30S ribosomal subunits. This is Ribosome maturation factor RimP from Magnetococcus marinus (strain ATCC BAA-1437 / JCM 17883 / MC-1).